The primary structure comprises 52 residues: Conotoxin Cal9.2d (52 aa).

Positions 1 to 6 (KRGVTL) are excised as a propeptide. Disulfide bonds link Cys14/Cys31, Cys19/Cys41, and Cys21/Cys46.

As to expression, expressed by the venom duct.

Its subcellular location is the secreted. Its function is as follows. Probable neurotoxin with unknown target. Possibly targets ion channels. This chain is Conotoxin Cal9.2d, found in Californiconus californicus (California cone).